Here is a 395-residue protein sequence, read N- to C-terminus: Sensor protein DltS (395 aa).

Helical transmembrane passes span 9-29 (FVFL…AVSN) and 136-156 (FLIL…SLYL). The 211-residue stretch at 177–387 (DASHELKTPI…RLEVQLPIDG (211 aa)) folds into the Histidine kinase domain. H180 carries the post-translational modification Phosphohistidine; by autocatalysis.

It is found in the cell membrane. It catalyses the reaction ATP + protein L-histidine = ADP + protein N-phospho-L-histidine.. Member of the two-component regulatory system DltS/DltR. Regulates the expression of the dlt operon. Probably phosphorylates DltR. The sequence is that of Sensor protein DltS (dltS) from Streptococcus agalactiae serotype V (strain ATCC BAA-611 / 2603 V/R).